Consider the following 447-residue polypeptide: Argininosuccinate synthase (447 aa).

ATP-binding positions include 17–25 and alanine 43; that span reads AFSGGLDTS. Tyrosine 99 serves as a coordination point for L-citrulline. Residues glycine 129 and threonine 131 each contribute to the ATP site. L-aspartate is bound by residues threonine 131, asparagine 135, and aspartate 136. Asparagine 135 serves as a coordination point for L-citrulline. Aspartate 136 is a binding site for ATP. L-citrulline-binding residues include arginine 139 and serine 192. Aspartate 194 serves as a coordination point for ATP. Residues threonine 201, glutamate 203, and glutamate 280 each coordinate L-citrulline.

This sequence belongs to the argininosuccinate synthase family. Type 2 subfamily. In terms of assembly, homotetramer.

It is found in the cytoplasm. The catalysed reaction is L-citrulline + L-aspartate + ATP = 2-(N(omega)-L-arginino)succinate + AMP + diphosphate + H(+). Its pathway is amino-acid biosynthesis; L-arginine biosynthesis; L-arginine from L-ornithine and carbamoyl phosphate: step 2/3. The chain is Argininosuccinate synthase from Salmonella paratyphi B (strain ATCC BAA-1250 / SPB7).